Consider the following 235-residue polypeptide: 7-carboxy-7-deazaguanine synthase (235 aa).

Residues 27-29 (LQG) and arginine 42 contribute to the substrate site. Residues 33-235 (FSGQPSVFVR…VQVHKILKIA (203 aa)) enclose the Radical SAM core domain. [4Fe-4S] cluster-binding residues include cysteine 46, cysteine 50, and cysteine 53. A Mg(2+)-binding site is contributed by threonine 55. Threonine 87 is a binding site for substrate. Residues glycine 89 and 133 to 135 (SPK) contribute to the S-adenosyl-L-methionine site.

This sequence belongs to the radical SAM superfamily. 7-carboxy-7-deazaguanine synthase family. Homodimer. The cofactor is [4Fe-4S] cluster. S-adenosyl-L-methionine is required as a cofactor. Mg(2+) serves as cofactor.

The catalysed reaction is 6-carboxy-5,6,7,8-tetrahydropterin + H(+) = 7-carboxy-7-deazaguanine + NH4(+). The protein operates within purine metabolism; 7-cyano-7-deazaguanine biosynthesis. Its function is as follows. Catalyzes the complex heterocyclic radical-mediated conversion of 6-carboxy-5,6,7,8-tetrahydropterin (CPH4) to 7-carboxy-7-deazaguanine (CDG), a step common to the biosynthetic pathways of all 7-deazapurine-containing compounds. This is 7-carboxy-7-deazaguanine synthase from Rhodospirillum rubrum (strain ATCC 11170 / ATH 1.1.1 / DSM 467 / LMG 4362 / NCIMB 8255 / S1).